The chain runs to 408 residues: 3-ketoacyl-CoA thiolase A, peroxisomal (408 aa).

Residue Cys-112 is the Acyl-thioester intermediate of the active site. Residues His-366 and Cys-394 each act as proton acceptor in the active site.

This sequence belongs to the thiolase-like superfamily. Thiolase family. Homodimer.

It localises to the peroxisome. It catalyses the reaction an acyl-CoA + acetyl-CoA = a 3-oxoacyl-CoA + CoA. It functions in the pathway lipid metabolism; fatty acid metabolism. This is 3-ketoacyl-CoA thiolase A, peroxisomal from Candida tropicalis (Yeast).